The following is a 349-amino-acid chain: 26S proteasome non-ATPase regulatory subunit 4 (349 aa).

Residues Ala5–Ile188 form the VWFA domain. The UIM 1 domain occupies Asp204 to Arg223. Positions Glu219–Ala234 are enriched in basic and acidic residues. Disordered stretches follow at residues Glu219–Asn257 and Thr274–Lys349. Residues Asn235–Asn253 show a composition bias toward low complexity. Positions Glu259–Glu278 constitute a UIM 2 domain. Residues Gln280 to Asp301 are compositionally biased toward low complexity. Over residues Leu335 to Lys349 the composition is skewed to basic and acidic residues.

It belongs to the proteasome subunit S5A family. In terms of assembly, the 26S proteasome is composed of a core protease, known as the 20S proteasome, capped at one or both ends by the 19S regulatory complex (RC). The RC is composed of at least 18 different subunits in two subcomplexes, the base and the lid, which form the portions proximal and distal to the 20S proteolytic core, respectively.

Binds and presumably selects ubiquitin-conjugates for destruction. This chain is 26S proteasome non-ATPase regulatory subunit 4 (psmD4), found in Dictyostelium discoideum (Social amoeba).